The chain runs to 112 residues: Integration host factor subunit alpha (112 aa).

The protein belongs to the bacterial histone-like protein family. Heterodimer of an alpha and a beta chain.

Functionally, this protein is one of the two subunits of integration host factor, a specific DNA-binding protein that functions in genetic recombination as well as in transcriptional and translational control. This Allorhizobium ampelinum (strain ATCC BAA-846 / DSM 112012 / S4) (Agrobacterium vitis (strain S4)) protein is Integration host factor subunit alpha.